Consider the following 396-residue polypeptide: Probable sugar efflux transporter (396 aa).

Helical transmembrane passes span 15–35, 51–71, 84–104, 109–129, 137–157, 168–188, 209–229, 245–265, 276–296, 297–317, 333–353, and 365–385; these read VLIM…PVAM, GLMM…AMLA, LFII…FWIL, MCIA…VMRI, QALG…LPIG, VTFG…IRLL, PLLL…FTAY, NFAT…SLLF, FIVV…FSTE, TIIA…CIGL, VATA…ALFG, and IGYT…TTHL.

It belongs to the major facilitator superfamily. SotB (TC 2.A.1.2) family.

The protein localises to the cell inner membrane. Its function is as follows. Involved in the efflux of sugars. The physiological role may be the reduction of the intracellular concentration of toxic sugars or sugar metabolites. This is Probable sugar efflux transporter from Haemophilus influenzae (strain PittGG).